The sequence spans 100 residues: Protein translation factor SUI1 homolog (100 aa).

This sequence belongs to the SUI1 family.

This is Protein translation factor SUI1 homolog from Sulfurisphaera tokodaii (strain DSM 16993 / JCM 10545 / NBRC 100140 / 7) (Sulfolobus tokodaii).